A 494-amino-acid chain; its full sequence is Cheilanthifoline synthase (494 aa).

The chain crosses the membrane as a helical span at residues 4–24 (TIWLIISTVIIVLGIAKFLLG). Cys437 contributes to the heme binding site.

Belongs to the cytochrome P450 family. The cofactor is heme. As to expression, expressed in roots and at lower levels in stems, leaves and plantlets.

The protein resides in the endoplasmic reticulum membrane. It carries out the reaction (S)-scoulerine + reduced [NADPH--hemoprotein reductase] + O2 = (S)-cheilanthifoline + oxidized [NADPH--hemoprotein reductase] + 2 H2O + H(+). Functionally, methylenedioxy bridge-forming cytochrome P450 involved in the biosynthesis of isoquinoline alkaloids. Converts (S)-scoulerine into (S)-cheilanthifoline, a precursor of sanguinarine. Catalyzes an oxidative reaction that does not incorporate oxygen into the product. In Argemone mexicana (Mexican prickly poppy), this protein is Cheilanthifoline synthase.